A 106-amino-acid polypeptide reads, in one-letter code: V-type proton ATPase subunit G2 (106 aa).

Residue Met1 is modified to N-acetylmethionine. The segment at 31 to 67 is disordered; the sequence is LKQAKEEAETEVAEHKTSTEQGFQRKLEATSGDSGAN. The span at 33–58 shows a compositional bias: basic and acidic residues; that stretch reads QAKEEAETEVAEHKTSTEQGFQRKLE.

The protein belongs to the V-ATPase G subunit family. V-ATPase is a heteromultimeric enzyme composed of a peripheral catalytic V1 complex (components A to H) attached to an integral membrane V0 proton pore complex (components: a, c, c'', d and e).

It localises to the vacuole membrane. Catalytic subunit of the peripheral V1 complex of vacuolar ATPase (V-ATPase). V-ATPase is responsible for acidifying a variety of intracellular compartments in eukaryotic cells. The polypeptide is V-type proton ATPase subunit G2 (VHA-G2) (Arabidopsis thaliana (Mouse-ear cress)).